A 513-amino-acid chain; its full sequence is Ankyrin repeat-containing protein YIL001W (513 aa).

ANK repeat units follow at residues 8-37 and 41-70; these read KNFE…NVNS and FDNS…VCDR. BTB domains are found at residues 122 to 179 and 274 to 360; these read RDIT…KFLY and PDVQ…DIPW.

This chain is Ankyrin repeat-containing protein YIL001W, found in Saccharomyces cerevisiae (strain ATCC 204508 / S288c) (Baker's yeast).